The primary structure comprises 340 residues: Ferrochelatase (340 aa).

H189 and E292 together coordinate Fe cation.

This sequence belongs to the ferrochelatase family.

It is found in the cytoplasm. The catalysed reaction is heme b + 2 H(+) = protoporphyrin IX + Fe(2+). Its pathway is porphyrin-containing compound metabolism; protoheme biosynthesis; protoheme from protoporphyrin-IX: step 1/1. Its function is as follows. Catalyzes the ferrous insertion into protoporphyrin IX. This is Ferrochelatase from Pseudomonas paraeruginosa (strain DSM 24068 / PA7) (Pseudomonas aeruginosa (strain PA7)).